A 584-amino-acid polypeptide reads, in one-letter code: Arginine--tRNA ligase (584 aa).

Residues 127–137 carry the 'HIGH' region motif; it reads PNTNKPLHVGH.

The protein belongs to the class-I aminoacyl-tRNA synthetase family. As to quaternary structure, monomer.

Its subcellular location is the cytoplasm. It carries out the reaction tRNA(Arg) + L-arginine + ATP = L-arginyl-tRNA(Arg) + AMP + diphosphate. In Borrelia turicatae (strain 91E135), this protein is Arginine--tRNA ligase.